Reading from the N-terminus, the 234-residue chain is Large ribosomal subunit protein uL1 (234 aa).

It belongs to the universal ribosomal protein uL1 family. In terms of assembly, part of the 50S ribosomal subunit.

Binds directly to 23S rRNA. The L1 stalk is quite mobile in the ribosome, and is involved in E site tRNA release. Functionally, protein L1 is also a translational repressor protein, it controls the translation of the L11 operon by binding to its mRNA. The chain is Large ribosomal subunit protein uL1 from Erwinia tasmaniensis (strain DSM 17950 / CFBP 7177 / CIP 109463 / NCPPB 4357 / Et1/99).